Reading from the N-terminus, the 241-residue chain is Chaperone protein HifB (241 aa).

The signal sequence occupies residues Met-1 to Asn-27.

It belongs to the periplasmic pilus chaperone family.

It localises to the periplasm. In terms of biological role, mediates assembly of pili by forming soluble multimeric complexes with pili subunits as an intermediate step in the assembly process. This protein is involved in type B pili (HifA) assembly. The chain is Chaperone protein HifB (hifB) from Haemophilus influenzae.